The following is a 498-amino-acid chain: MSGDAFNMSVAYQPSGMAVPEWLNKGDNAWQMISATLVGMQSVPGLVILYGSIVKKKWAVNSAFMALYAFAAVWLCWVTWGYNMSFGHKLLPFWGKARPALGQSFLLAQAVLPQTTQFYKGGGGADAVVETPWVNPLYPMATMVYFQCVFAAITLILLAGSLLGRMNIKAWMLFVPLWLTFSYTVGAFSLWGGGFLFHWGVMDYSGGYVIHLSSGVAGFTAAYWVGPRSTKDRERFPPNNVLLMLTGAGILWMGWAGFNGGDPYSANIDSSLAVLNTNICAATSLLVWTCLDVIFFKKPSVIGAVQGMITGLVCITPGAGLVQGWAAIVMGILSGSIPWFTMMVVHKRSRLLQQVDDTLGVFHTHAVAGFLGGATTGLFAEPVLCSLFLPVTNSRGAFYPGRGGGLQFVRQVAGALFIICWNVVVTSLVCLAVRAVVPLRMPEEELAIGDDAVHGEEAYALWGDGEKYDSTKHGWYSDNNDTHHNNNKAAPSGVTQNV.

Transmembrane regions (helical) follow at residues 33–53, 58–78, 143–163, 171–191, 206–226, 241–261, 276–296, 301–321, 325–345, 369–389, and 412–432; these read ISATLVGMQSVPGLVILYGSI, WAVNSAFMALYAFAAVWLCWV, MVYFQCVFAAITLILLAGSLL, WMLFVPLWLTFSYTVGAFSLW, GGYVIHLSSGVAGFTAAYWVG, VLLMLTGAGILWMGWAGFNGG, NTNICAATSLLVWTCLDVIFF, VIGAVQGMITGLVCITPGAGL, WAAIVMGILSGSIPWFTMMVV, GFLGGATTGLFAEPVLCSLFL, and VAGALFIICWNVVVTSLVCLA. Positions 478–498 are disordered; sequence DNNDTHHNNNKAAPSGVTQNV. Polar residues predominate over residues 487-498; sequence NKAAPSGVTQNV.

This sequence belongs to the ammonia transporter channel (TC 1.A.11.2) family. Expressed in root.

It is found in the membrane. Involved in ammonium transport. This chain is Ammonium transporter 3 member 1 (AMT3-1), found in Oryza sativa subsp. japonica (Rice).